A 281-amino-acid polypeptide reads, in one-letter code: sn-glycerol-3-phosphate transport system permease protein UgpE (281 aa).

The next 6 helical transmembrane spans lie at 16–36, 85–105, 113–133, 142–162, 202–222, and 247–267; these read LILG…AATL, FSIT…IVWF, FFWM…FPTV, LDSY…TFLF, ALFV…LLII, and WNSV…IVLV. An ABC transmembrane type-1 domain is found at 77-268; sequence LLNSFVMAFS…IPPVVIVLVM (192 aa).

It belongs to the binding-protein-dependent transport system permease family. UgpAE subfamily. The complex is composed of two ATP-binding proteins (UgpC), two transmembrane proteins (UgpA and UgpE) and a solute-binding protein (UgpB).

It is found in the cell inner membrane. In terms of biological role, part of the ABC transporter complex UgpBAEC involved in sn-glycerol-3-phosphate (G3P) import. Probably responsible for the translocation of the substrate across the membrane. This chain is sn-glycerol-3-phosphate transport system permease protein UgpE (ugpE), found in Shigella flexneri serotype 5b (strain 8401).